We begin with the raw amino-acid sequence, 290 residues long: Agmatinase (290 aa).

6 residues coordinate Mn(2+): H112, D135, H137, D139, D216, and D218.

The protein belongs to the arginase family. Agmatinase subfamily. Mn(2+) serves as cofactor.

It carries out the reaction agmatine + H2O = urea + putrescine. It participates in amine and polyamine biosynthesis; putrescine biosynthesis via agmatine pathway; putrescine from agmatine: step 1/1. In terms of biological role, catalyzes the formation of putrescine from agmatine. The chain is Agmatinase (speB) from Bacillus cereus (strain ATCC 14579 / DSM 31 / CCUG 7414 / JCM 2152 / NBRC 15305 / NCIMB 9373 / NCTC 2599 / NRRL B-3711).